A 335-amino-acid polypeptide reads, in one-letter code: Methionine import ATP-binding protein MetN (335 aa).

The ABC transporter domain maps to 2–241 (IQFQRLHKSY…PQHPTTRRFV (240 aa)). 38 to 45 (GHSGAGKS) contacts ATP.

The protein belongs to the ABC transporter superfamily. Methionine importer (TC 3.A.1.24) family. As to quaternary structure, the complex is composed of two ATP-binding proteins (MetN), two transmembrane proteins (MetI) and a solute-binding protein (MetQ).

The protein localises to the cell inner membrane. It carries out the reaction L-methionine(out) + ATP + H2O = L-methionine(in) + ADP + phosphate + H(+). It catalyses the reaction D-methionine(out) + ATP + H2O = D-methionine(in) + ADP + phosphate + H(+). Functionally, part of the ABC transporter complex MetNIQ involved in methionine import. Responsible for energy coupling to the transport system. The sequence is that of Methionine import ATP-binding protein MetN from Xanthomonas campestris pv. campestris (strain 8004).